Here is a 71-residue protein sequence, read N- to C-terminus: Small, acid-soluble spore protein 2 (71 aa).

The protein belongs to the alpha/beta-type SASP family.

Functionally, SASP are bound to spore DNA. They are double-stranded DNA-binding proteins that cause DNA to change to an a-like conformation. They protect the DNA backbone from chemical and enzymatic cleavage and are thus involved in dormant spore's high resistance to UV light. In Bacillus subtilis, this protein is Small, acid-soluble spore protein 2.